Reading from the N-terminus, the 411-residue chain is Argininosuccinate synthase (411 aa).

Residues 10–18 (AYSGGLDTS) and Ala-37 each bind ATP. L-citrulline contacts are provided by Tyr-89 and Ser-94. Residue Gly-119 coordinates ATP. 3 residues coordinate L-aspartate: Thr-121, Asn-125, and Asp-126. Asn-125 contributes to the L-citrulline binding site. L-citrulline contacts are provided by Arg-129, Ser-178, Ser-187, Glu-263, and Tyr-275.

This sequence belongs to the argininosuccinate synthase family. Type 1 subfamily. As to quaternary structure, homotetramer.

It is found in the cytoplasm. It catalyses the reaction L-citrulline + L-aspartate + ATP = 2-(N(omega)-L-arginino)succinate + AMP + diphosphate + H(+). The protein operates within amino-acid biosynthesis; L-arginine biosynthesis; L-arginine from L-ornithine and carbamoyl phosphate: step 2/3. In Aeromonas salmonicida (strain A449), this protein is Argininosuccinate synthase.